A 135-amino-acid chain; its full sequence is MARTKQTARKSTGGKAPRKQLATKAARKTPATGGVKKPHRYRPGTVALREIRKYQKSTELLIRKLPFQRLVREIAQDFKTDLRFQSQAVVALQEAAEAYLVGLFEDTNLCAITAKRVTIMPKDIQLARRIRGERA.

Residues 1 to 40 are disordered; the sequence is MARTKQTARKSTGGKAPRKQLATKAARKTPATGGVKKPHR. Lysine 5 is subject to N6-methyllysine. Lysine 10 bears the N6-acetyllysine; alternate mark. Position 10 is an N6-methyllysine; alternate (lysine 10). Phosphoserine is present on serine 11. Threonine 12 is modified (phosphothreonine). 3 positions are modified to N6-acetyllysine: lysine 15, lysine 19, and lysine 24. Lysine 28 carries the post-translational modification N6-acetyllysine; alternate. Lysine 28 carries the post-translational modification N6-methyllysine; alternate. Residues lysine 36 and lysine 37 each carry the N6-methyllysine modification.

Belongs to the histone H3 family. As to quaternary structure, the nucleosome is a histone octamer containing two molecules each of H2A, H2B, H3 and H4 assembled in one H3-H4 heterotetramer and two H2A-H2B heterodimers. The octamer wraps approximately 147 bp of DNA. In terms of processing, acetylation is generally linked to gene activation. Acetylated to form H3K9ac (11%), H3K14ac (17%), H3K18ac (11%), H3K23ac (16%) and H3K27ac (7%). H3K4, H3K35 and H3K36 are not acetylated. H3K4me prevents acetylation. 32% of the histone H3 are acetylated with, on average, 2.4 acetyl-Lys. They are all continuously deacatylated and re-acetylated with a half-life of approximately 2 minutes. Post-translationally, monomethylated to form H3K4me1 (81%), H3K9me1 (16%), H3K27me1 (25%), H3K35me1 (25%) and H3K36me1 (5%). No methylation at H3K14, H3K18 and H3K23. Methylated by a protein complex that includes Mut11. Set1 methylates specifically H3K4. H3K4me1 is associated with silenced euchromatin. Set3 forms H3K9me1, while H3K9me2 is undetected. H3K9me1 is specifically associated with silent, multi-copy transgenes. No phosphorylation detected.

It is found in the nucleus. The protein resides in the chromosome. In terms of biological role, core component of nucleosome. Nucleosomes wrap and compact DNA into chromatin, limiting DNA accessibility to the cellular machineries which require DNA as a template. Histones thereby play a central role in transcription regulation, DNA repair, DNA replication and chromosomal stability. DNA accessibility is regulated via a complex set of post-translational modifications of histones, also called histone code, and nucleosome remodeling. This chain is Histone H3 type 3 (ch3-IV), found in Chlamydomonas reinhardtii (Chlamydomonas smithii).